The chain runs to 336 residues: Phospho-N-acetylmuramoyl-pentapeptide-transferase (336 aa).

Helical transmembrane passes span 3–23 (LTLIAAIISFMVSAFTMPYFI), 53–73 (GGTVFLLVATAVSLLVSLFSI), 78–98 (SLALISGILSIVVIYGIIGFL), 118–138 (LALQLAGGLMFYFLHVSPSGI), 143–163 (VFGYQLSLGIFYLFFVLFWVV), 174–194 (GIDGLASISVVISLVTYGVIA), 200–220 (FDVLLLIGTMIGALLGFFLFN), 226–246 (VFMGDVGSLALGAMLAAISIA), 251–271 (WTLLIIGIVYVLETSSVMLQV), and 316–336 (AFLWGVGSLASLLVLAILYVF).

It belongs to the glycosyltransferase 4 family. MraY subfamily. The cofactor is Mg(2+).

It is found in the cell membrane. It catalyses the reaction UDP-N-acetyl-alpha-D-muramoyl-L-alanyl-gamma-D-glutamyl-L-lysyl-D-alanyl-D-alanine + di-trans,octa-cis-undecaprenyl phosphate = Mur2Ac(oyl-L-Ala-gamma-D-Glu-L-Lys-D-Ala-D-Ala)-di-trans,octa-cis-undecaprenyl diphosphate + UMP. It functions in the pathway cell wall biogenesis; peptidoglycan biosynthesis. Functionally, catalyzes the initial step of the lipid cycle reactions in the biosynthesis of the cell wall peptidoglycan: transfers peptidoglycan precursor phospho-MurNAc-pentapeptide from UDP-MurNAc-pentapeptide onto the lipid carrier undecaprenyl phosphate, yielding undecaprenyl-pyrophosphoryl-MurNAc-pentapeptide, known as lipid I. The polypeptide is Phospho-N-acetylmuramoyl-pentapeptide-transferase (Streptococcus pyogenes serotype M6 (strain ATCC BAA-946 / MGAS10394)).